Reading from the N-terminus, the 257-residue chain is Adenylate kinase (257 aa).

51–56 (GAGKGT) contributes to the ATP binding site. The interval 71 to 100 (ATGDMLRSQVAKKTELGKEAKKIMDQGGLV) is NMP. Residues Thr72, Arg77, 98–100 (GLV), 127–130 (GFPR), and Gln134 each bind AMP. An LID region spans residues 168–205 (GRLVHPASGRSYHKIFNPPKQEMKDDITGEPLIQRSDD). Residues Arg169 and 178 to 179 (SY) each bind ATP. The AMP site is built by Arg202 and Arg213. Position 241 (Gln241) interacts with ATP.

The protein belongs to the adenylate kinase family. AK2 subfamily. In terms of assembly, monomer.

It localises to the cytoplasm. The protein localises to the cytosol. It is found in the mitochondrion intermembrane space. It catalyses the reaction AMP + ATP = 2 ADP. In terms of biological role, catalyzes the reversible transfer of the terminal phosphate group between ATP and AMP. Plays an important role in cellular energy homeostasis and in adenine nucleotide metabolism. Adenylate kinase activity is critical for regulation of the phosphate utilization and the AMP de novo biosynthesis pathways. In Aspergillus terreus (strain NIH 2624 / FGSC A1156), this protein is Adenylate kinase (adk1).